A 356-amino-acid chain; its full sequence is Ribosomal RNA large subunit methyltransferase M (356 aa).

S-adenosyl-L-methionine is bound by residues serine 187, 220 to 223 (CPGG), aspartate 239, aspartate 259, and aspartate 276. Catalysis depends on lysine 305, which acts as the Proton acceptor.

Belongs to the class I-like SAM-binding methyltransferase superfamily. RNA methyltransferase RlmE family. RlmM subfamily. Monomer.

Its subcellular location is the cytoplasm. It carries out the reaction cytidine(2498) in 23S rRNA + S-adenosyl-L-methionine = 2'-O-methylcytidine(2498) in 23S rRNA + S-adenosyl-L-homocysteine + H(+). Catalyzes the 2'-O-methylation at nucleotide C2498 in 23S rRNA. This Pseudoalteromonas atlantica (strain T6c / ATCC BAA-1087) protein is Ribosomal RNA large subunit methyltransferase M.